We begin with the raw amino-acid sequence, 170 residues long: Protein HemX (170 aa).

The span at Met-1–Ser-17 shows a compositional bias: polar residues. The interval Met-1 to Arg-24 is disordered. Residues Gly-37–Tyr-57 form a helical membrane-spanning segment.

It localises to the cell membrane. This is Protein HemX from Proteus mirabilis.